The primary structure comprises 243 residues: MALKPIIVIPARIGSTRLPQKALAEIAGKPMIVHVAEQAKKAAFGRTIVATDHHDIAKAVIAYGHECIMTSSHHESGSDRIYEALNHIDPERCYNTILNVQGDLPTITPHEIISALRPLKNSLTDIATLGAKIVEKDEKTDPNVVKIIGTPLSQNRLRALYFTRATAPYGDGPLYHHIGIYAYRREALEKFVALKPSTLEQREKLEQLRALEHNMRIDVEIIDTIPLGVDTQYDLERVRKILA.

This sequence belongs to the KdsB family.

It is found in the cytoplasm. The catalysed reaction is 3-deoxy-alpha-D-manno-oct-2-ulosonate + CTP = CMP-3-deoxy-beta-D-manno-octulosonate + diphosphate. It functions in the pathway nucleotide-sugar biosynthesis; CMP-3-deoxy-D-manno-octulosonate biosynthesis; CMP-3-deoxy-D-manno-octulosonate from 3-deoxy-D-manno-octulosonate and CTP: step 1/1. The protein operates within bacterial outer membrane biogenesis; lipopolysaccharide biosynthesis. Activates KDO (a required 8-carbon sugar) for incorporation into bacterial lipopolysaccharide in Gram-negative bacteria. This Bartonella quintana (strain Toulouse) (Rochalimaea quintana) protein is 3-deoxy-manno-octulosonate cytidylyltransferase.